The sequence spans 152 residues: Superoxide dismutase [Cu-Zn] (152 aa).

Positions 45, 47, and 62 each coordinate Cu cation. A disulfide bond links Cys56 and Cys145. The Zn(2+) site is built by His62, His70, His79, and Asp82. A Cu cation-binding site is contributed by His119.

The protein belongs to the Cu-Zn superoxide dismutase family. In terms of assembly, homodimer. Cu cation serves as cofactor. The cofactor is Zn(2+).

Its subcellular location is the cytoplasm. It catalyses the reaction 2 superoxide + 2 H(+) = H2O2 + O2. In terms of biological role, destroys radicals which are normally produced within the cells and which are toxic to biological systems. The chain is Superoxide dismutase [Cu-Zn] (SODCC) from Nicotiana plumbaginifolia (Leadwort-leaved tobacco).